Consider the following 510-residue polypeptide: UDP-N-acetylmuramoylalanine--D-glutamate ligase (510 aa).

138-144 provides a ligand contact to ATP; sequence GTNGKTT. Residues 294-316 form a disordered region; it reads FDEPAPAPRRKKDAPPPTRAGGR.

This sequence belongs to the MurCDEF family.

The protein resides in the cytoplasm. It catalyses the reaction UDP-N-acetyl-alpha-D-muramoyl-L-alanine + D-glutamate + ATP = UDP-N-acetyl-alpha-D-muramoyl-L-alanyl-D-glutamate + ADP + phosphate + H(+). The protein operates within cell wall biogenesis; peptidoglycan biosynthesis. Cell wall formation. Catalyzes the addition of glutamate to the nucleotide precursor UDP-N-acetylmuramoyl-L-alanine (UMA). The polypeptide is UDP-N-acetylmuramoylalanine--D-glutamate ligase (Bordetella pertussis (strain Tohama I / ATCC BAA-589 / NCTC 13251)).